The primary structure comprises 459 residues: MNRLPSSASALACSAHALNLIEKRTLDHEEMKALNREVIEYFKEHVNPGFLEYRKSVTAGGDYGAVEWQAGGLNTLVDTQGEEFIDCLGGFGIFNVGHRNPVVVSAVQNQLAKQPLHSQELLDPLRAMLAKTLAALTPGKLKYSFFCNSGTESVEAALKLAKAYQSPRGKFTFIATSGAFHGKSLGALSATAKSTFRKPFMPLLPGFRHVPFGNIEAMRTALNECKKTGDDVAAVILEPIQGEGGVILPPPGYLTAVRKLCDEFGALMILDEVQTGMGRTGKMFACEHENVQPDILCLAKALGGGVMPIGATIATEEVFSVLFDNPFLHTTTFGGNPLACAAALATINVLLEQNLPAQAEQKGDMLLDGFRQLAREYPDLVQEARGKGMLMAIEFVDNEIGYNFASEMFRQRVLVAGTLNNAKTIRIEPPLTLTIEQCELVIKAARKALAAMRVSVEEA.

Pyridoxal 5'-phosphate contacts are provided by residues 150–151 (GT) and glutamine 274. Lysine 300 is modified (N6-(pyridoxal phosphate)lysine). Threonine 332 serves as a coordination point for pyridoxal 5'-phosphate.

Belongs to the class-III pyridoxal-phosphate-dependent aminotransferase family. Putrescine aminotransferase subfamily. It depends on pyridoxal 5'-phosphate as a cofactor.

The enzyme catalyses an alkane-alpha,omega-diamine + 2-oxoglutarate = an omega-aminoaldehyde + L-glutamate. The catalysed reaction is putrescine + 2-oxoglutarate = 1-pyrroline + L-glutamate + H2O. It catalyses the reaction cadaverine + 2-oxoglutarate = 5-aminopentanal + L-glutamate. It functions in the pathway amine and polyamine degradation; putrescine degradation; 4-aminobutanal from putrescine (transaminase route): step 1/1. Functionally, catalyzes the aminotransferase reaction from putrescine to 2-oxoglutarate, leading to glutamate and 4-aminobutanal, which spontaneously cyclizes to form 1-pyrroline. This is the first step in one of two pathways for putrescine degradation, where putrescine is converted into 4-aminobutanoate (gamma-aminobutyrate or GABA) via 4-aminobutanal. Also functions as a cadaverine transaminase in a a L-lysine degradation pathway to succinate that proceeds via cadaverine, glutarate and L-2-hydroxyglutarate. The polypeptide is Putrescine aminotransferase (Escherichia coli (strain ATCC 8739 / DSM 1576 / NBRC 3972 / NCIMB 8545 / WDCM 00012 / Crooks)).